A 1945-amino-acid chain; its full sequence is Rho GTPase-activating protein 21 (1945 aa).

The interval 26 to 53 is disordered; that stretch reads CEVSKNKDGKDQGEPVSPSEDEPFSWPG. The span at 29–38 shows a compositional bias: basic and acidic residues; it reads SKNKDGKDQG. Phosphoserine occurs at positions 42 and 63. In terms of domain architecture, PDZ spans 56–165; the sequence is TVMLKRTSQG…TLELSVMPKD (110 aa). Disordered stretches follow at residues 210 to 229 and 326 to 365; these read TAQP…QQTS and HQTT…DSPP. Positions 347–358 are enriched in low complexity; it reads SGHSEGISSSRS. Position 454 is a phosphoserine (serine 454). The span at 499 to 512 shows a compositional bias: polar residues; it reads EATATVNSESQIPD. The disordered stretch occupies residues 499 to 519; it reads EATATVNSESQIPDSNGERKQ. Omega-N-methylarginine is present on residues arginine 549 and arginine 569. Disordered regions lie at residues 573–647 and 674–702; these read PVSQ…RPVN and EVSS…LELP. The span at 589–600 shows a compositional bias: polar residues; it reads SNRNFPTTTGVS. Phosphoserine occurs at positions 610 and 619. The span at 674–696 shows a compositional bias: polar residues; the sequence is EVSSCLPGTSAKTSPQLSENLGT. Position 741 is a phosphothreonine (threonine 741). Serine 851, serine 856, and serine 875 each carry phosphoserine. Disordered stretches follow at residues 852–879 and 902–921; these read HDQE…YDEG and ITDS…SSSE. The span at 866–879 shows a compositional bias: basic and acidic residues; sequence HSSKTERSKSYDEG. Position 876 is a phosphotyrosine (tyrosine 876). A phosphoserine mark is found at serine 918, serine 920, serine 948, serine 1093, and serine 1109. The interaction with ARF1 and ARF6 stretch occupies residues 924 to 1091; the sequence is SDAAREGWLQ…AKSEPKTQSP (168 aa). Residues 925–1034 enclose the PH domain; that stretch reads DAAREGWLQF…WIKTIQESSN (110 aa). The segment at 1080-1120 is disordered; the sequence is LGAKSEPKTQSPHSPKEESERKLLSKDDTSPPKDKGTWRRG. The span at 1093–1116 shows a compositional bias: basic and acidic residues; it reads SPKEESERKLLSKDDTSPPKDKGT. The Rho-GAP domain maps to 1141–1333; the sequence is VRLDDCPPAH…TLIQHHDWFF (193 aa). Disordered stretches follow at residues 1373 to 1396, 1412 to 1632, 1649 to 1794, and 1846 to 1945; these read PGDV…SGKD, SRKR…PVFP, ARVS…LGGH, and RTSA…ETPP. The span at 1377-1395 shows a compositional bias: low complexity; the sequence is SDSATSDSAKSKGSWGSGK. 3 positions are modified to phosphoserine: serine 1412, serine 1426, and serine 1427. Basic and acidic residues-rich tracts occupy residues 1435 to 1457 and 1471 to 1488; these read FFKK…RESE and SNTK…KIPW. Lysine 1438 is covalently cross-linked (Glycyl lysine isopeptide (Lys-Gly) (interchain with G-Cter in SUMO)). Threonine 1504 carries the phosphothreonine modification. 2 stretches are compositionally biased toward low complexity: residues 1531 to 1556 and 1569 to 1589; these read SDSG…STSP and TTTS…LDSS. The interaction with CTNNA1 stretch occupies residues 1579 to 1848; it reads STTYLTSLDS…WLARERVRTS (270 aa). Over residues 1590 to 1599 the composition is skewed to polar residues; that stretch reads RLSPEVQSVA. The span at 1611–1621 shows a compositional bias: basic and acidic residues; it reads SELVSEGRPVE. Residue serine 1656 is modified to Phosphoserine. 2 stretches are compositionally biased toward polar residues: residues 1658 to 1681 and 1729 to 1738; these read GSEA…QFSS and STGSLLTPSR. Threonine 1669 is modified (phosphothreonine). Serine 1729 is subject to Phosphoserine. Residues 1739 to 1757 show a composition bias toward basic and acidic residues; the sequence is SESEKQEATWKTKIADRLK. A compositionally biased stretch (basic residues) spans 1782 to 1792; that stretch reads RKNIKRRHTLG. Polar residues predominate over residues 1871 to 1882; that stretch reads PISTHSPPSQQP. Low complexity predominate over residues 1887–1896; the sequence is AATSTLASTS. The residue at position 1902 (threonine 1902) is a Phosphothreonine. Serine 1906 carries the post-translational modification Phosphoserine. Residues 1907–1927 show a composition bias toward polar residues; the sequence is PDQINRESFQNMSQNASSTAN. The segment covering 1932–1945 has biased composition (basic and acidic residues); it reads KQSESPDTKAETPP.

Interacts with CTNNA1. Interacts with GTP-bound ARF1 and probably ARF6. Sumoylated with SUMO2 and SUMO3 in proliferating lymphocytes.

Its subcellular location is the golgi apparatus membrane. It localises to the cell junction. The protein localises to the cytoplasmic vesicle membrane. The protein resides in the cytoplasm. It is found in the cytoskeleton. In terms of biological role, functions as a GTPase-activating protein (GAP) for RHOA and CDC42. Downstream partner of ARF1 which may control Golgi apparatus structure and function. Also required for CTNNA1 recruitment to adherens junctions. The protein is Rho GTPase-activating protein 21 of Mus musculus (Mouse).